The chain runs to 216 residues: Thylakoid lumenal 16.5 kDa protein, chloroplastic (216 aa).

The transit peptide at 1-38 directs the protein to the chloroplast; sequence MAKSLLCSSTLNPFFSTTLSSSKKNQIAYSGNSKNQTS. The transit peptide at 39–73 directs the protein to the thylakoid; that stretch reads SSLLWKRRELSLGFMSSLVAIGLVSNDRRRHDANA.

Its subcellular location is the plastid. It localises to the chloroplast thylakoid lumen. This is Thylakoid lumenal 16.5 kDa protein, chloroplastic from Arabidopsis thaliana (Mouse-ear cress).